The primary structure comprises 245 residues: 1-(5-phosphoribosyl)-5-[(5-phosphoribosylamino)methylideneamino] imidazole-4-carboxamide isomerase (245 aa).

Residue Asp7 is the Proton acceptor of the active site. Asp129 acts as the Proton donor in catalysis.

The protein belongs to the HisA/HisF family.

The protein localises to the cytoplasm. The enzyme catalyses 1-(5-phospho-beta-D-ribosyl)-5-[(5-phospho-beta-D-ribosylamino)methylideneamino]imidazole-4-carboxamide = 5-[(5-phospho-1-deoxy-D-ribulos-1-ylimino)methylamino]-1-(5-phospho-beta-D-ribosyl)imidazole-4-carboxamide. It participates in amino-acid biosynthesis; L-histidine biosynthesis; L-histidine from 5-phospho-alpha-D-ribose 1-diphosphate: step 4/9. This chain is 1-(5-phosphoribosyl)-5-[(5-phosphoribosylamino)methylideneamino] imidazole-4-carboxamide isomerase, found in Salmonella choleraesuis (strain SC-B67).